The following is a 239-amino-acid chain: BURP domain-containing protein 6 (239 aa).

The signal sequence occupies residues 1–19; that stretch reads MPGAIRDLINPVSSAASAS. A BURP domain is found at 28 to 239; it reads FFLEKDLFPG…PQDDMLWVRN (212 aa).

In terms of tissue distribution, expressed in leaves and shoot.

This Oryza sativa subsp. japonica (Rice) protein is BURP domain-containing protein 6 (BURP6).